Here is a 146-residue protein sequence, read N- to C-terminus: 3-dehydroquinate dehydratase (146 aa).

Residue Tyr24 is the Proton acceptor of the active site. 3 residues coordinate substrate: Asn73, His79, and Asp86. His99 acts as the Proton donor in catalysis. Substrate-binding positions include 100–101 and Arg110; that span reads LS.

The protein belongs to the type-II 3-dehydroquinase family. As to quaternary structure, homododecamer.

The enzyme catalyses 3-dehydroquinate = 3-dehydroshikimate + H2O. The protein operates within metabolic intermediate biosynthesis; chorismate biosynthesis; chorismate from D-erythrose 4-phosphate and phosphoenolpyruvate: step 3/7. Functionally, catalyzes a trans-dehydration via an enolate intermediate. The chain is 3-dehydroquinate dehydratase from Shewanella baltica (strain OS185).